Reading from the N-terminus, the 270-residue chain is Glutamate 5-kinase (270 aa).

Lys-15 is a binding site for ATP. Substrate-binding residues include Ser-55, Asp-142, and Asn-158. ATP is bound by residues 178 to 179 and 220 to 226; these read SD and TGGMLSK.

It belongs to the glutamate 5-kinase family.

Its subcellular location is the cytoplasm. The catalysed reaction is L-glutamate + ATP = L-glutamyl 5-phosphate + ADP. The protein operates within amino-acid biosynthesis; L-proline biosynthesis; L-glutamate 5-semialdehyde from L-glutamate: step 1/2. Functionally, catalyzes the transfer of a phosphate group to glutamate to form L-glutamate 5-phosphate. The protein is Glutamate 5-kinase of Streptococcus uberis (strain ATCC BAA-854 / 0140J).